We begin with the raw amino-acid sequence, 525 residues long: Retinoblastoma-binding-like protein E (525 aa).

WD repeat units follow at residues 25–66, 69–108, 222–261, 267–312, and 313–352; these read PKNI…IVRT, HHTGCVNSISWSRNGKKLLTASNDGSLVLWDLATSKILYS, SSNTTVKQIEFSRNHRFMLVSSSDKVLRLISLESTNLYQQ, DSVN…KDLE, and GPKEGLVDVVWHPLRPIIVSISFTGVIYVWTAYFEENWSS. Disordered stretches follow at residues 371-398 and 462-525; these read DEFDAKDSDNENQEVNNNNNNNIGRNPY and EKYQ…KKRK. Over residues 383–392 the composition is skewed to low complexity; it reads QEVNNNNNNN. Residues 462 to 471 are compositionally biased toward basic and acidic residues; it reads EKYQKDKEDS. Positions 472 to 500 are enriched in low complexity; sequence SSTTSNSTISSSSSPSPSSSSTTTTTTTS. Residues 501-525 show a composition bias toward basic and acidic residues; sequence QKKDETQKKEKSTKKERNSDSKKRK.

It is found in the nucleus. Its function is as follows. Involved in mono-, di- and trimethylation at 'Lys-4' of histone H3. Histone H3 'Lys-4' methylation represents a specific tag for epigenetic transcriptional activation. The polypeptide is Retinoblastoma-binding-like protein E (Dictyostelium discoideum (Social amoeba)).